The sequence spans 336 residues: Glycerol-3-phosphate dehydrogenase [NAD(P)+] (336 aa).

NADPH contacts are provided by Ser-16, Tyr-17, His-37, and Lys-111. Residues Lys-111, Gly-140, and Thr-142 each coordinate sn-glycerol 3-phosphate. NADPH is bound at residue Ala-144. Sn-glycerol 3-phosphate contacts are provided by Lys-196, Asp-249, Ser-259, Arg-260, and Asn-261. The active-site Proton acceptor is the Lys-196. Arg-260 contacts NADPH. NADPH is bound by residues Val-284 and Glu-286.

The protein belongs to the NAD-dependent glycerol-3-phosphate dehydrogenase family.

The protein localises to the cytoplasm. The catalysed reaction is sn-glycerol 3-phosphate + NAD(+) = dihydroxyacetone phosphate + NADH + H(+). It catalyses the reaction sn-glycerol 3-phosphate + NADP(+) = dihydroxyacetone phosphate + NADPH + H(+). Its pathway is membrane lipid metabolism; glycerophospholipid metabolism. Its function is as follows. Catalyzes the reduction of the glycolytic intermediate dihydroxyacetone phosphate (DHAP) to sn-glycerol 3-phosphate (G3P), the key precursor for phospholipid synthesis. The chain is Glycerol-3-phosphate dehydrogenase [NAD(P)+] from Actinobacillus pleuropneumoniae serotype 5b (strain L20).